The primary structure comprises 461 residues: Nucleobindin-1 (461 aa).

The signal sequence occupies residues 1-26 (MPPSGPRGTLLLLPLLLLLLLRAVLA). Residues 42–51 (TESPDTGLYY) form an O-glycosylated at one site region. At S86 the chain carries Phosphoserine; by FAM20C. At T148 the chain carries Phosphothreonine; by FAM20C. Residues 150 to 218 (EARDLELLIQ…QQRRHREHPK (69 aa)) adopt a coiled-coil conformation. A DNA-binding region spans residues 172 to 218 (HHEEFKRYEMLKEHERRRYLESLGEEQRKEAERKLEEQQRRHREHPK). Residues 193-210 (SLGEEQRKEAERKLEEQQ) show a composition bias toward basic and acidic residues. The interval 193–221 (SLGEEQRKEAERKLEEQQRRHREHPKVNV) is disordered. The binds to GNAI2 and GNAI3 stretch occupies residues 228–321 (LKEVWEELDG…VTLEEFLAST (94 aa)). EF-hand domains follow at residues 240-275 (PNRFNPKTFFILHDINSDGVLDEQELEALFTKELEK) and 292-327 (ERLRMREHVMKNVDTNQDRLVTLEEFLASTQRKEFG). Ca(2+) is bound by residues D253, N255, D257, E264, D305, N307, D309, and E316. A GBA motif is present at residues 303-333 (NVDTNQDRLVTLEEFLASTQRKEFGDTGEGW). Residues 341 to 407 (AYTEEELRRF…QRKQQQQQQQ (67 aa)) are a coiled coil. Positions 368–461 (LSQETEALGR…LPEVEVPQHL (94 aa)) are disordered. A Phosphoserine; by FAM20C modification is found at S369. Basic and acidic residues predominate over residues 437 to 461 (DQKEVDTSEKKLLERLPEVEVPQHL).

This sequence belongs to the nucleobindin family. Interacts (via GBA motif) with guanine nucleotide-binding protein G(i) alpha subunits GNAI1, GNAI2 and GNAI3 with higher affinity for GNAI1 and GNAI3 than for GNAI2. Preferentially interacts with inactive rather than active GNAI3. Interaction with GNAI3 is inhibited when NUCB1 binds calcium, probably due to a conformational change which renders the GBA motif inaccessible. Post-translationally, O-glycosylated. As to expression, expressed both in fetal and adult heart, lung, liver, kidney and brain, and in adult skeletal muscle, placenta and pancreas.

It localises to the golgi apparatus. The protein localises to the cis-Golgi network membrane. The protein resides in the cytoplasm. It is found in the secreted. Functionally, major calcium-binding protein of the Golgi which may have a role in calcium homeostasis. Acts as a non-receptor guanine nucleotide exchange factor which binds to and activates alpha subunits of guanine nucleotide-binding proteins (G proteins). This chain is Nucleobindin-1 (NUCB1), found in Homo sapiens (Human).